The sequence spans 81 residues: High-potential iron-sulfur protein (81 aa).

[4Fe-4S] cluster is bound by residues Cys43, Cys46, Cys59, and Cys73.

This sequence belongs to the high-potential iron-sulfur protein (HiPIP) family. In terms of assembly, homodimer.

It is found in the periplasm. In terms of biological role, specific class of high-redox-potential 4Fe-4S ferredoxins. Functions in anaerobic electron transport in most purple and in some other photosynthetic bacteria and in at least one genus (Paracoccus) of halophilic, denitrifying bacteria. This chain is High-potential iron-sulfur protein, found in Halochromatium salexigens (Chromatium salexigens).